Consider the following 261-residue polypeptide: Precorrin-6A synthase [deacetylating] (261 aa).

It carries out the reaction precorrin-5 + S-adenosyl-L-methionine + H2O = precorrin-6A + acetate + S-adenosyl-L-homocysteine + 2 H(+). The protein operates within cofactor biosynthesis; adenosylcobalamin biosynthesis; cob(II)yrinate a,c-diamide from precorrin-2 (aerobic route): step 5/10. Its function is as follows. Catalyzes the methylation of C-1 in precorrin-5 and the subsequent extrusion of acetic acid from the resulting intermediate to form cobalt-precorrin-6A. The protein is Precorrin-6A synthase [deacetylating] (cobF) of Sinorhizobium sp.